Reading from the N-terminus, the 70-residue chain is Large ribosomal subunit protein bL31 (70 aa).

The Zn(2+) site is built by C16, C18, C37, and C40.

Belongs to the bacterial ribosomal protein bL31 family. Type A subfamily. In terms of assembly, part of the 50S ribosomal subunit. The cofactor is Zn(2+).

In terms of biological role, binds the 23S rRNA. The protein is Large ribosomal subunit protein bL31 of Shewanella baltica (strain OS223).